The following is a 918-amino-acid chain: DNA mismatch repair protein MutS (918 aa).

Residue glycine 662–serine 669 coordinates ATP.

This sequence belongs to the DNA mismatch repair MutS family.

This protein is involved in the repair of mismatches in DNA. It is possible that it carries out the mismatch recognition step. This protein has a weak ATPase activity. In Sorangium cellulosum (strain So ce56) (Polyangium cellulosum (strain So ce56)), this protein is DNA mismatch repair protein MutS.